A 200-amino-acid polypeptide reads, in one-letter code: Potassium-transporting ATPase KdpC subunit (200 aa).

Residues 7–27 traverse the membrane as a helical segment; the sequence is PALVMIVLFTILTGLIYPLAM.

The protein belongs to the KdpC family. As to quaternary structure, the system is composed of three essential subunits: KdpA, KdpB and KdpC.

The protein localises to the cell inner membrane. Its function is as follows. Part of the high-affinity ATP-driven potassium transport (or Kdp) system, which catalyzes the hydrolysis of ATP coupled with the electrogenic transport of potassium into the cytoplasm. This subunit acts as a catalytic chaperone that increases the ATP-binding affinity of the ATP-hydrolyzing subunit KdpB by the formation of a transient KdpB/KdpC/ATP ternary complex. The protein is Potassium-transporting ATPase KdpC subunit of Methylocella silvestris (strain DSM 15510 / CIP 108128 / LMG 27833 / NCIMB 13906 / BL2).